An 894-amino-acid polypeptide reads, in one-letter code: Translation initiation factor IF-2 (894 aa).

Positions 47–305 (AHLNRENGSG…GSALQQSFQK (259 aa)) are disordered. Positions 68–82 (STLNIPGTGGKSKSV) are enriched in polar residues. 2 stretches are compositionally biased toward basic and acidic residues: residues 93–159 (VKRD…KDKV) and 166–219 (DMTK…KWTD). The segment covering 254–269 (GRSRNAKAARPAKKGN) has biased composition (basic residues). The segment covering 270 to 283 (KHSESKADREEARA) has biased composition (basic and acidic residues). One can recognise a tr-type G domain in the interval 393 to 562 (PRAPVVTIMG…LLQAEVLELK (170 aa)). Residues 402-409 (GHVDHGKT) are G1. 402-409 (GHVDHGKT) is a GTP binding site. The tract at residues 427–431 (GITQH) is G2. Positions 448 to 451 (DTPG) are G3. Residues 448 to 452 (DTPGH) and 502 to 505 (NKID) contribute to the GTP site. Residues 502 to 505 (NKID) form a G4 region. The G5 stretch occupies residues 538 to 540 (SAK).

The protein belongs to the TRAFAC class translation factor GTPase superfamily. Classic translation factor GTPase family. IF-2 subfamily.

The protein resides in the cytoplasm. Functionally, one of the essential components for the initiation of protein synthesis. Protects formylmethionyl-tRNA from spontaneous hydrolysis and promotes its binding to the 30S ribosomal subunits. Also involved in the hydrolysis of GTP during the formation of the 70S ribosomal complex. The polypeptide is Translation initiation factor IF-2 (Citrobacter koseri (strain ATCC BAA-895 / CDC 4225-83 / SGSC4696)).